Here is a 336-residue protein sequence, read N- to C-terminus: Transcription factor MYB29 (336 aa).

HTH myb-type domains follow at residues 9–65 and 66–116; these read GEGL…KPDI and KRGE…KKLL. 2 consecutive DNA-binding regions (H-T-H motif) follow at residues 37-61 and 89-112; these read WRDI…ANYL and WSVI…NTHL. The interval 127–170 is disordered; the sequence is KPLAYDSNPDEQSQSGSISPKSLPPSSSKNVPEITSSDETPKYD. The span at 141-154 shows a compositional bias: low complexity; the sequence is SGSISPKSLPPSSS. Residues 155–164 show a composition bias toward polar residues; that stretch reads KNVPEITSSD.

Can form complexes with MYC2, MYC3 or MYC4. In terms of tissue distribution, expressed in both vegetative and generative organs. Mostly present in seedlings, inflorescences, roots and stems, and, to a lower extent, in leaves (in midvein and trichomes) and siliques.

It localises to the nucleus. Functionally, plays a minor rheostat role in aliphatic glucosinolates (GLSs) biosynthesis, mostly short chained. Together with MYB28/HAG1 and MYB76/HAG2, promotes aliphatic glucosinolate biosynthesis but represses indolic glucosinolate biosynthesis. Prevents insect performance (e.g. lepidopteran insect Mamestra brassicae) by promoting glucosinolates. The sequence is that of Transcription factor MYB29 (MYB29) from Arabidopsis thaliana (Mouse-ear cress).